Here is a 187-residue protein sequence, read N- to C-terminus: Large ribosomal subunit protein bL9 (187 aa).

Positions 168–187 (EEAPAEEDVAAEETSEAAEA) are disordered.

Belongs to the bacterial ribosomal protein bL9 family.

Its function is as follows. Binds to the 23S rRNA. In Paramagnetospirillum magneticum (strain ATCC 700264 / AMB-1) (Magnetospirillum magneticum), this protein is Large ribosomal subunit protein bL9.